The sequence spans 374 residues: 4-galactosyl-N-acetylglucosaminide 3-alpha-L-fucosyltransferase FUT5 (374 aa).

The Cytoplasmic segment spans residues Met-1 to Arg-15. The helical; Signal-anchor for type II membrane protein transmembrane segment at Cys-16–Leu-34 threads the bilayer. At Arg-35–Thr-374 the chain is on the lumenal side. N-linked (GlcNAc...) asparagine glycosylation is found at Asn-60, Asn-105, Asn-167, and Asn-198.

It belongs to the glycosyltransferase 10 family. Liver, colon and testis and trace amounts in T-cells and brain.

It is found in the golgi apparatus. It localises to the golgi stack membrane. The enzyme catalyses a beta-D-galactosyl-(1-&gt;3)-N-acetyl-beta-D-glucosaminyl derivative + GDP-beta-L-fucose = a beta-D-galactosyl-(1-&gt;3)-[alpha-L-fucosyl-(1-&gt;4)]-N-acetyl-beta-D-glucosaminyl derivative + GDP + H(+). The catalysed reaction is an N-acetyl-alpha-neuraminyl-(2-&gt;3)-beta-D-galactosyl-(1-&gt;4)-N-acetyl-beta-D-glucosaminyl derivative + GDP-beta-L-fucose = an alpha-Neu5Ac-(2-&gt;3)-beta-D-Gal-(1-&gt;4)-[alpha-L-Fuc-(1-&gt;3)]-beta-D-GlcNAc derivative + GDP + H(+). It catalyses the reaction an alpha-Neu5Ac-(2-&gt;3)-beta-D-Gal-(1-&gt;4)-beta-D-GlcNAc-(1-&gt;3)-beta-D-Gal-(1-&gt;4)-[alpha-L-Fuc-(1-&gt;3)]-beta-D-GlcNAc derivative + GDP-beta-L-fucose = an alpha-Neu5Ac-(2-&gt;3)-beta-D-Gal-(1-&gt;4)-[alpha-L-Fuc-(1-&gt;3)]-beta-D-GlcNAc-(1-&gt;3)-beta-D-Gal-(1-&gt;4)-[alpha-L-Fuc-(1-&gt;3)]-beta-D-GlcNAc derivative + GDP + H(+). It carries out the reaction a beta-D-galactosyl-(1-&gt;4)-N-acetyl-beta-D-glucosaminyl derivative + GDP-beta-L-fucose = a beta-D-galactosyl-(1-&gt;4)-[alpha-L-fucosyl-(1-&gt;3)]-N-acetyl-beta-D-glucosaminyl derivative + GDP + H(+). The enzyme catalyses a neolactoside nLc4Cer + GDP-beta-L-fucose = a neolactoside III(3)-alpha-Fuc-nLc4Cer + GDP + H(+). The catalysed reaction is a neolactoside nLc6Cer + GDP-beta-L-fucose = beta-D-galactosyl-(1-&gt;4)-N-acetyl-beta-D-glucosaminyl-(1-&gt;3)-beta-D-galactosyl-(1-&gt;4)-[alpha-L-fucosyl-(1-&gt;3)]-N-acetyl-beta-D-glucosaminyl-(1-&gt;3)-beta-D-galactosyl-(1-&gt;4)-beta-D-glucosyl-(1&lt;-&gt;1')-ceramide + GDP + H(+). It catalyses the reaction a neolactoside nLc6Cer(d18:1(4E)) + GDP-beta-L-fucose = a neolactoside III(3)-alpha-Fuc-nLc6Cer(d18:1(4E)) + GDP + H(+). It carries out the reaction a neolactoside nLc4Cer(d18:1(4E)) + GDP-beta-L-fucose = a neolactoside III(3)-alpha-Fuc-nLc4Cer(d18:1(4E)) + GDP + H(+). The enzyme catalyses a neolactoside VI(3)-alpha-NeuNAc-nLc6Cer + GDP-beta-L-fucose = a neolactoside VI(3)-alpha-NeuAc,III(3)-alphaFuc-nLc6Cer + GDP + H(+). The catalysed reaction is beta-D-galactosyl-(1-&gt;4)-N-acetyl-D-glucosamine + GDP-beta-L-fucose = beta-D-galactosyl-(1-&gt;4)-[alpha-L-fucosyl-(1-&gt;3)]-N-acetyl-D-glucosamine + GDP + H(+). It catalyses the reaction N-acetyl-alpha-neuraminosyl-(2-&gt;3)-beta-D-galactosyl-(1-&gt;4)-N-acetyl-beta-D-glucosamine + GDP-beta-L-fucose = N-acetyl-alpha-neuraminosyl-(2-&gt;3)-beta-D-galactosyl-(1-&gt;4)-[alpha-L-fucosyl-(1-&gt;3)]-N-acetyl-beta-D-glucosamine + GDP + H(+). It carries out the reaction alpha-L-Fuc-(1-&gt;2)-beta-D-Gal-(1-&gt;4)-D-GlcNAc + GDP-beta-L-fucose = alpha-L-Fuc-(1-&gt;2)-beta-D-Gal-(1-&gt;4)-[alpha-L-Fuc-(1-&gt;3)]-D-GlcNAc + GDP + H(+). The enzyme catalyses an alpha-Neu5Ac-(2-&gt;3)-beta-D-Gal-(1-&gt;3)-D-GlcNAc derivative + GDP-beta-L-fucose = an alpha-Neu5Ac-(2-&gt;3)-beta-D-Gal-(1-&gt;3)-[alpha-L-Fuc-(1-&gt;4)]-beta-D-GlcNAc derivative + GDP + H(+). Its pathway is protein modification; protein glycosylation. In terms of biological role, catalyzes preferentially the transfer of L-fucose, from a guanosine diphosphate-beta-L-fucose, to the N-acetyl-beta-D-glucosamine (GlcNAc) of an N-acetyllactosamine unit (type 2 chain) of an oligosaccharide, or a glycoprotein- and a glycolipid-linked N-acetyllactosamine unit via an alpha (1,3) linkage and participates in the surface expression of VIM-2, Lewis X/SSEA-1 and sialyl Lewis X antigens. Preferentially transfers fucose to the GlcNAc of an internal N-acetyllactosamine unit of a poly-N-acetyllactosamine chain acceptor substrate. Also catalyzes to a lesser extend the transfer of L-fucose to the GlcNAc of a type 1 (beta-D-galactosyl-(1-&gt;3)-N-acetyl-beta-D-glucosaminyl) or H-type 1 (alpha-L-Fuc-(1-&gt;2)-beta-D-Gal-(1-&gt;3)-D-GlcNAc) chain oligosaccharide via an alpha (1,4) linkage. Preferentially catalyzes sialylated type 2 oligosaccharide acceptors over neutral type 2 or H type 2 (alpha-L-Fuc-(1-&gt;2)-beta-D-Gal-(1-&gt;4)-D-GlcNAc) oligosaccharide acceptors. Lactose-based structures are also acceptor substrates. The chain is 4-galactosyl-N-acetylglucosaminide 3-alpha-L-fucosyltransferase FUT5 from Homo sapiens (Human).